The primary structure comprises 644 residues: Exoribonuclease 2 (644 aa).

An RNB domain is found at 189-516 (REDLTALNFV…NHRLLKAIIT (328 aa)). The 83-residue stretch at 561–643 (DTRFTAEIID…ETRNVIARPV (83 aa)) folds into the S1 motif domain.

This sequence belongs to the RNR ribonuclease family. RNase II subfamily.

Its subcellular location is the cytoplasm. The enzyme catalyses Exonucleolytic cleavage in the 3'- to 5'-direction to yield nucleoside 5'-phosphates.. Functionally, involved in mRNA degradation. Hydrolyzes single-stranded polyribonucleotides processively in the 3' to 5' direction. The chain is Exoribonuclease 2 from Yersinia pseudotuberculosis serotype O:3 (strain YPIII).